Here is a 122-residue protein sequence, read N- to C-terminus: Secreted RxLR effector protein 80 (122 aa).

Positions methionine 1–serine 21 are cleaved as a signal peptide. The short motif at arginine 72 to arginine 75 is the RxLR element.

This sequence belongs to the RxLR effector family.

The protein resides in the secreted. It localises to the host endoplasmic reticulum membrane. Its function is as follows. Secreted effector that dos not suppress the host cell death induced by cell death-inducing proteins. The sequence is that of Secreted RxLR effector protein 80 from Plasmopara viticola (Downy mildew of grapevine).